Reading from the N-terminus, the 423-residue chain is Histidine--tRNA ligase (423 aa).

It belongs to the class-II aminoacyl-tRNA synthetase family. As to quaternary structure, homodimer.

It localises to the cytoplasm. The enzyme catalyses tRNA(His) + L-histidine + ATP = L-histidyl-tRNA(His) + AMP + diphosphate + H(+). The sequence is that of Histidine--tRNA ligase from Anoxybacillus flavithermus (strain DSM 21510 / WK1).